A 453-amino-acid chain; its full sequence is Bifunctional protein GlmU (453 aa).

Residues 1-231 (MERTCLAVIL…EIEMTGCNTR (231 aa)) are pyrophosphorylase. UDP-N-acetyl-alpha-D-glucosamine contacts are provided by residues 10-13 (LAAG), Lys-24, Gln-77, 82-83 (GT), 105-107 (YGD), Gly-143, Glu-157, Asn-172, and Asn-229. Asp-107 contributes to the Mg(2+) binding site. Residue Asn-229 participates in Mg(2+) binding. The segment at 232 to 252 (AELAVIERFWQERRRHQMMLS) is linker. Residues 253–453 (GVTMIAPETV…AIKAAKKAKA (201 aa)) are N-acetyltransferase. 2 residues coordinate UDP-N-acetyl-alpha-D-glucosamine: Arg-318 and Lys-336. The active-site Proton acceptor is His-348. Positions 351 and 362 each coordinate UDP-N-acetyl-alpha-D-glucosamine. Residues Ala-365, 371–372 (NY), Ser-390, Ser-408, and Arg-425 each bind acetyl-CoA.

In the N-terminal section; belongs to the N-acetylglucosamine-1-phosphate uridyltransferase family. It in the C-terminal section; belongs to the transferase hexapeptide repeat family. Homotrimer. Mg(2+) serves as cofactor.

Its subcellular location is the cytoplasm. It carries out the reaction alpha-D-glucosamine 1-phosphate + acetyl-CoA = N-acetyl-alpha-D-glucosamine 1-phosphate + CoA + H(+). The enzyme catalyses N-acetyl-alpha-D-glucosamine 1-phosphate + UTP + H(+) = UDP-N-acetyl-alpha-D-glucosamine + diphosphate. It functions in the pathway nucleotide-sugar biosynthesis; UDP-N-acetyl-alpha-D-glucosamine biosynthesis; N-acetyl-alpha-D-glucosamine 1-phosphate from alpha-D-glucosamine 6-phosphate (route II): step 2/2. It participates in nucleotide-sugar biosynthesis; UDP-N-acetyl-alpha-D-glucosamine biosynthesis; UDP-N-acetyl-alpha-D-glucosamine from N-acetyl-alpha-D-glucosamine 1-phosphate: step 1/1. Its pathway is bacterial outer membrane biogenesis; LPS lipid A biosynthesis. Catalyzes the last two sequential reactions in the de novo biosynthetic pathway for UDP-N-acetylglucosamine (UDP-GlcNAc). The C-terminal domain catalyzes the transfer of acetyl group from acetyl coenzyme A to glucosamine-1-phosphate (GlcN-1-P) to produce N-acetylglucosamine-1-phosphate (GlcNAc-1-P), which is converted into UDP-GlcNAc by the transfer of uridine 5-monophosphate (from uridine 5-triphosphate), a reaction catalyzed by the N-terminal domain. In Rhizobium johnstonii (strain DSM 114642 / LMG 32736 / 3841) (Rhizobium leguminosarum bv. viciae), this protein is Bifunctional protein GlmU.